The chain runs to 460 residues: Polygalacturonase (460 aa).

The signal sequence occupies residues 1–26 (MALKTQLLWSFVVVFVVSFSTTSCSG). Residue N280 is glycosylated (N-linked (GlcNAc...) asparagine). D292 acts as the Proton donor in catalysis. H315 is a catalytic residue. The N-linked (GlcNAc...) asparagine glycan is linked to N421.

This sequence belongs to the glycosyl hydrolase 28 family.

It is found in the secreted. The protein localises to the cell wall. It catalyses the reaction (1,4-alpha-D-galacturonosyl)n+m + H2O = (1,4-alpha-D-galacturonosyl)n + (1,4-alpha-D-galacturonosyl)m.. Acts in concert with the pectinesterase, in the ripening process. Is involved in cell wall metabolism, specifically in polyuronide degradation. This chain is Polygalacturonase, found in Malus domestica (Apple).